The chain runs to 336 residues: Solute-binding protein Csal_2479 (336 aa).

The first 33 residues, 1 to 33 (MQTNKRLKMASCVKAAAMLGMLLSVSISTTAQA), serve as a signal peptide directing secretion. Residues H42, Q80, R156, R177, Y200, 217–218 (NN), and E244 contribute to the beta-D-glucuronate site.

The protein belongs to the bacterial solute-binding protein 7 family. In terms of assembly, the complex is comprised of an extracytoplasmic solute-binding protein and a heteromeric permease formed by two transmembrane proteins.

It localises to the periplasm. Its function is as follows. Solute-binding protein that binds D-glucuronate (in vitro). Probably part of a tripartite ATP-independent periplasmic (TRAP) transport system that mediates solute transport into the cytoplasm. The chain is Solute-binding protein Csal_2479 from Chromohalobacter salexigens (strain ATCC BAA-138 / DSM 3043 / CIP 106854 / NCIMB 13768 / 1H11).